Here is a 167-residue protein sequence, read N- to C-terminus: NAD(P)H-quinone oxidoreductase subunit J (167 aa).

This sequence belongs to the complex I 30 kDa subunit family. As to quaternary structure, NDH-1 can be composed of about 15 different subunits; different subcomplexes with different compositions have been identified which probably have different functions.

The protein resides in the cellular thylakoid membrane. It carries out the reaction a plastoquinone + NADH + (n+1) H(+)(in) = a plastoquinol + NAD(+) + n H(+)(out). The catalysed reaction is a plastoquinone + NADPH + (n+1) H(+)(in) = a plastoquinol + NADP(+) + n H(+)(out). Its function is as follows. NDH-1 shuttles electrons from an unknown electron donor, via FMN and iron-sulfur (Fe-S) centers, to quinones in the respiratory and/or the photosynthetic chain. The immediate electron acceptor for the enzyme in this species is believed to be plastoquinone. Couples the redox reaction to proton translocation, and thus conserves the redox energy in a proton gradient. Cyanobacterial NDH-1 also plays a role in inorganic carbon-concentration. The chain is NAD(P)H-quinone oxidoreductase subunit J from Microcystis aeruginosa (strain NIES-843 / IAM M-2473).